Consider the following 220-residue polypeptide: Deoxyribose-phosphate aldolase (220 aa).

D89 serves as the catalytic Proton donor/acceptor. K151 serves as the catalytic Schiff-base intermediate with acetaldehyde. K180 acts as the Proton donor/acceptor in catalysis.

Belongs to the DeoC/FbaB aldolase family. DeoC type 1 subfamily.

It localises to the cytoplasm. It catalyses the reaction 2-deoxy-D-ribose 5-phosphate = D-glyceraldehyde 3-phosphate + acetaldehyde. Its pathway is carbohydrate degradation; 2-deoxy-D-ribose 1-phosphate degradation; D-glyceraldehyde 3-phosphate and acetaldehyde from 2-deoxy-alpha-D-ribose 1-phosphate: step 2/2. Its function is as follows. Catalyzes a reversible aldol reaction between acetaldehyde and D-glyceraldehyde 3-phosphate to generate 2-deoxy-D-ribose 5-phosphate. This is Deoxyribose-phosphate aldolase from Streptococcus gordonii (strain Challis / ATCC 35105 / BCRC 15272 / CH1 / DL1 / V288).